The primary structure comprises 419 residues: MVINAGAKLSIARLIRPTASYHPAIGGIRYYSAPPESTIPAAKLKYIPTSGTYPQGFLVSGTYVGVKPTNKSTPDLAFLASEIPCAAAAVFTKNKFQAAPVTVSRKMLQRRENAGIRSVIINSGCANAVTGKGGMEDAEKMVAEADRCYHAPKDGKGGSSIVMSTGVIGQRMAGMTKGAGMIHPNMATLLGMIATDAPIAPALLPSLLKNAVDKSFNSISIDGDTSTNDTVAVLANGVAGGKEVTSESSKDHAAFQKVLTEFAIDLAKLVVRDGEGATKFVTIRVTEAPSEIGARKIASTIARSPLVKTALYGKDANWGRILCATGYSQISEPGEPINKVPEIVPEKTSVSFIPSDGSPELKLLVNGEPESVDETRAAEILEHEDLEILINLGGGKEEAVYWTCDFSHEYVTINGDYRT.

Substrate is bound by residues Lys-177, Thr-188, Glu-275, Asn-414, and Thr-419. Catalysis depends on Thr-188, which acts as the Nucleophile.

It belongs to the ArgJ family. Heterodimer of an alpha and a beta chain. The alpha and beta chains are autoproteolytically processed from a single precursor protein within the mitochondrion.

The protein resides in the mitochondrion matrix. It catalyses the reaction N(2)-acetyl-L-ornithine + L-glutamate = N-acetyl-L-glutamate + L-ornithine. It carries out the reaction L-glutamate + acetyl-CoA = N-acetyl-L-glutamate + CoA + H(+). It participates in amino-acid biosynthesis; L-arginine biosynthesis; L-ornithine and N-acetyl-L-glutamate from L-glutamate and N(2)-acetyl-L-ornithine (cyclic): step 1/1. Its pathway is amino-acid biosynthesis; L-arginine biosynthesis; N(2)-acetyl-L-ornithine from L-glutamate: step 1/4. In terms of biological role, catalyzes two activities which are involved in the cyclic version of arginine biosynthesis: the synthesis of acetylglutamate from glutamate and acetyl-CoA, and of ornithine by transacetylation between acetylornithine and glutamate. This is Arginine biosynthesis bifunctional protein ArgJ 1, mitochondrial from Sclerotinia sclerotiorum (strain ATCC 18683 / 1980 / Ss-1) (White mold).